Reading from the N-terminus, the 447-residue chain is CBL-interacting serine/threonine-protein kinase 9 (447 aa).

One can recognise a Protein kinase domain in the interval 19–274 (YEMGRTLGEG…IAELLEDEWF (256 aa)). ATP is bound by residues 25–33 (LGEGSFAKV) and lysine 48. Residue aspartate 142 is the Proton acceptor of the active site. Positions 160 to 189 (DFGLSAFSRQVREDGLLHTACGTPNYVAPE) are activation loop. Serine 164 carries the post-translational modification Phosphoserine. A Phosphothreonine modification is found at threonine 178. The region spanning 312–336 (EKPVSMNAFELISSSSEFSLENLFE) is the NAF domain. The segment at 343–372 (KKETRFTSQRSASEIMSKMEETAKPLGFNV) is PPI.

This sequence belongs to the protein kinase superfamily. CAMK Ser/Thr protein kinase family. SNF1 subfamily. Interacts with CBL2 and CBL3. Mn(2+) is required as a cofactor. In terms of tissue distribution, expressed at low levels in roots and shoots. Detected in root vascular bundles and in the leaf vascular tissue and hydathode, but not in root tips.

It localises to the cytoplasm. The protein resides in the nucleus. It catalyses the reaction L-seryl-[protein] + ATP = O-phospho-L-seryl-[protein] + ADP + H(+). The catalysed reaction is L-threonyl-[protein] + ATP = O-phospho-L-threonyl-[protein] + ADP + H(+). Functionally, CIPK serine-threonine protein kinases interact with CBL proteins. Binding of a CBL protein to the regulatory NAF domain of CIPK protein lead to the activation of the kinase in a calcium-dependent manner. Involved in K(+) homeostasis under low-K(+) stress. The polypeptide is CBL-interacting serine/threonine-protein kinase 9 (CIPK9) (Arabidopsis thaliana (Mouse-ear cress)).